A 473-amino-acid chain; its full sequence is Ribulose bisphosphate carboxylase large chain (473 aa).

Substrate-binding residues include Asn116 and Thr166. The Proton acceptor role is filled by Lys168. Lys170 contacts substrate. 3 residues coordinate Mg(2+): Lys194, Asp196, and Glu197. Lys194 is subject to N6-carboxylysine. Catalysis depends on His287, which acts as the Proton acceptor. The substrate site is built by Arg288, His320, and Ser372.

This sequence belongs to the RuBisCO large chain family. Type I subfamily. In terms of assembly, heterohexadecamer of 8 large chains and 8 small chains. Mg(2+) is required as a cofactor.

The enzyme catalyses 2 (2R)-3-phosphoglycerate + 2 H(+) = D-ribulose 1,5-bisphosphate + CO2 + H2O. The catalysed reaction is D-ribulose 1,5-bisphosphate + O2 = 2-phosphoglycolate + (2R)-3-phosphoglycerate + 2 H(+). RuBisCO catalyzes two reactions: the carboxylation of D-ribulose 1,5-bisphosphate, the primary event in carbon dioxide fixation, as well as the oxidative fragmentation of the pentose substrate. Both reactions occur simultaneously and in competition at the same active site. This chain is Ribulose bisphosphate carboxylase large chain, found in Nitrosomonas europaea (strain ATCC 19718 / CIP 103999 / KCTC 2705 / NBRC 14298).